A 934-amino-acid polypeptide reads, in one-letter code: Leucine--tRNA ligase 1 (934 aa).

The short motif at 41–51 (PYTNSPMHVGH) is the 'HIGH' region element. A 'KMSKS' region motif is present at residues 616-620 (KMSKS). Residue Lys-619 participates in ATP binding.

It belongs to the class-I aminoacyl-tRNA synthetase family.

Its subcellular location is the cytoplasm. The catalysed reaction is tRNA(Leu) + L-leucine + ATP = L-leucyl-tRNA(Leu) + AMP + diphosphate. The sequence is that of Leucine--tRNA ligase 1 from Saccharolobus solfataricus (strain ATCC 35092 / DSM 1617 / JCM 11322 / P2) (Sulfolobus solfataricus).